A 263-amino-acid chain; its full sequence is Acyl-[acyl-carrier-protein]--UDP-N-acetylglucosamine O-acyltransferase (263 aa).

Belongs to the transferase hexapeptide repeat family. LpxA subfamily. Homotrimer.

The protein resides in the cytoplasm. The catalysed reaction is a (3R)-hydroxyacyl-[ACP] + UDP-N-acetyl-alpha-D-glucosamine = a UDP-3-O-[(3R)-3-hydroxyacyl]-N-acetyl-alpha-D-glucosamine + holo-[ACP]. It functions in the pathway glycolipid biosynthesis; lipid IV(A) biosynthesis; lipid IV(A) from (3R)-3-hydroxytetradecanoyl-[acyl-carrier-protein] and UDP-N-acetyl-alpha-D-glucosamine: step 1/6. Involved in the biosynthesis of lipid A, a phosphorylated glycolipid that anchors the lipopolysaccharide to the outer membrane of the cell. The polypeptide is Acyl-[acyl-carrier-protein]--UDP-N-acetylglucosamine O-acyltransferase (Caulobacter vibrioides (strain ATCC 19089 / CIP 103742 / CB 15) (Caulobacter crescentus)).